Consider the following 432-residue polypeptide: MTNVVVVGSQWGDEGKGKIVDWLSERADIVVRFQGGHNAGHTLVIDGTSYKLSLLPSGVVRPGKMAVIGNGVVVDPHALIAEIEKLSAQGVTITPDNLRIADNATLILSLHRELDAMREDAASNSGTKIGTTRRGIGPAYEDKVGRRAIRVMDLADLDSLPGKVDRILTHHNALRRGLGVAEVSHQTIMDELTSVAERVLPFRDTVWLFLDKERRKGARILFEGAQGSLLDIDHGTYPFVTSSNTVAGQAAAGSGMGPGSLGYILGITKAYTTRVGEGPFPTELTDEIGQFLGEKGHEFGTVTGRKRRCGWFDAALVRQSVATNGITGIALTKLDVLDGLEELKICVGYMLDGEQIDHLPASQGAQARVEPIYVTLEGWKESTVGARSWADLPAQAIKYVRQVEELIGAPVALLSTSPERDDTILVTDPFED.

GTP-binding positions include 12-18 (GDEGKGK) and 40-42 (GHT). Asp13 serves as the catalytic Proton acceptor. 2 residues coordinate Mg(2+): Asp13 and Gly40. Residues 13–16 (DEGK), 38–41 (NAGH), Thr132, Arg146, Gln226, Thr241, and Arg305 contribute to the IMP site. The Proton donor role is filled by His41. 301–307 (TVTGRKR) is a substrate binding site. GTP-binding positions include Arg307, 333-335 (KLD), and 415-417 (STS).

It belongs to the adenylosuccinate synthetase family. Homodimer. It depends on Mg(2+) as a cofactor.

The protein localises to the cytoplasm. The enzyme catalyses IMP + L-aspartate + GTP = N(6)-(1,2-dicarboxyethyl)-AMP + GDP + phosphate + 2 H(+). Its pathway is purine metabolism; AMP biosynthesis via de novo pathway; AMP from IMP: step 1/2. Plays an important role in the de novo pathway of purine nucleotide biosynthesis. Catalyzes the first committed step in the biosynthesis of AMP from IMP. This is Adenylosuccinate synthetase from Rhizobium etli (strain ATCC 51251 / DSM 11541 / JCM 21823 / NBRC 15573 / CFN 42).